Reading from the N-terminus, the 296-residue chain is Immediate early response gene 5-like protein (296 aa).

The protein belongs to the IER family.

This Xenopus tropicalis (Western clawed frog) protein is Immediate early response gene 5-like protein (ier5l).